The sequence spans 89 residues: Large ribosomal subunit protein eL34 (89 aa).

Positions 45–71 (GIPRGRPVEMRKLPKTKKRPERPMPHL) are disordered.

This sequence belongs to the eukaryotic ribosomal protein eL34 family. As to quaternary structure, part of the 50S ribosomal subunit.

The sequence is that of Large ribosomal subunit protein eL34 from Pyrococcus furiosus (strain ATCC 43587 / DSM 3638 / JCM 8422 / Vc1).